The sequence spans 269 residues: Cytochrome c oxidase subunit 3 (269 aa).

The next 7 helical transmembrane spans lie at 21-41, 45-65, 90-110, 138-160, 167-187, 205-225, and 247-267; these read PWPI…ALAM, IGNM…ATLW, GFLL…WAYF, PLLN…HALI, ALSG…CQYI, FYAG…MLAI, and VIYL…FYWW.

The protein belongs to the cytochrome c oxidase subunit 3 family. In terms of assembly, component of the cytochrome c oxidase (complex IV, CIV), a multisubunit enzyme composed of a catalytic core of 3 subunits and several supernumerary subunits. The complex exists as a monomer or a dimer and forms supercomplexes (SCs) in the inner mitochondrial membrane with ubiquinol-cytochrome c oxidoreductase (cytochrome b-c1 complex, complex III, CIII).

The protein localises to the mitochondrion inner membrane. The enzyme catalyses 4 Fe(II)-[cytochrome c] + O2 + 8 H(+)(in) = 4 Fe(III)-[cytochrome c] + 2 H2O + 4 H(+)(out). In terms of biological role, component of the cytochrome c oxidase, the last enzyme in the mitochondrial electron transport chain which drives oxidative phosphorylation. The respiratory chain contains 3 multisubunit complexes succinate dehydrogenase (complex II, CII), ubiquinol-cytochrome c oxidoreductase (cytochrome b-c1 complex, complex III, CIII) and cytochrome c oxidase (complex IV, CIV), that cooperate to transfer electrons derived from NADH and succinate to molecular oxygen, creating an electrochemical gradient over the inner membrane that drives transmembrane transport and the ATP synthase. Cytochrome c oxidase is the component of the respiratory chain that catalyzes the reduction of oxygen to water. Electrons originating from reduced cytochrome c in the intermembrane space (IMS) are transferred via the dinuclear copper A center (CU(A)) of subunit 2 and heme A of subunit 1 to the active site in subunit 1, a binuclear center (BNC) formed by heme A3 and copper B (CU(B)). The BNC reduces molecular oxygen to 2 water molecules using 4 electrons from cytochrome c in the IMS and 4 protons from the mitochondrial matrix. The sequence is that of Cytochrome c oxidase subunit 3 (COX3) from Lachancea kluyveri (strain ATCC 58438 / CBS 3082 / BCRC 21498 / NBRC 1685 / JCM 7257 / NCYC 543 / NRRL Y-12651) (Yeast).